Here is a 225-residue protein sequence, read N- to C-terminus: ATP-dependent dethiobiotin synthetase BioD (225 aa).

Gly12–Val17 lines the ATP pocket. Thr16 is a binding site for Mg(2+). Residue Lys37 is part of the active site. Thr41 contacts substrate. Residues Asp49, Glu108–Gly111, and Pro197–Gly199 each bind ATP. Mg(2+) contacts are provided by Asp49 and Glu108.

Belongs to the dethiobiotin synthetase family. Homodimer. Mg(2+) is required as a cofactor.

The protein resides in the cytoplasm. The enzyme catalyses (7R,8S)-7,8-diammoniononanoate + CO2 + ATP = (4R,5S)-dethiobiotin + ADP + phosphate + 3 H(+). It participates in cofactor biosynthesis; biotin biosynthesis; biotin from 7,8-diaminononanoate: step 1/2. Catalyzes a mechanistically unusual reaction, the ATP-dependent insertion of CO2 between the N7 and N8 nitrogen atoms of 7,8-diaminopelargonic acid (DAPA, also called 7,8-diammoniononanoate) to form a ureido ring. In Mycolicibacterium smegmatis (strain ATCC 700084 / mc(2)155) (Mycobacterium smegmatis), this protein is ATP-dependent dethiobiotin synthetase BioD.